The chain runs to 249 residues: Probable transcriptional regulatory protein DICTH_1505 (249 aa).

It belongs to the TACO1 family.

The protein resides in the cytoplasm. This chain is Probable transcriptional regulatory protein DICTH_1505, found in Dictyoglomus thermophilum (strain ATCC 35947 / DSM 3960 / H-6-12).